Reading from the N-terminus, the 471-residue chain is ATP synthase subunit beta 2 (471 aa).

157–164 (GGAGVGKT) is an ATP binding site.

This sequence belongs to the ATPase alpha/beta chains family. As to quaternary structure, F-type ATPases have 2 components, CF(1) - the catalytic core - and CF(0) - the membrane proton channel. CF(1) has five subunits: alpha(3), beta(3), gamma(1), delta(1), epsilon(1). CF(0) has three main subunits: a(1), b(2) and c(9-12). The alpha and beta chains form an alternating ring which encloses part of the gamma chain. CF(1) is attached to CF(0) by a central stalk formed by the gamma and epsilon chains, while a peripheral stalk is formed by the delta and b chains.

It localises to the cell inner membrane. It carries out the reaction ATP + H2O + 4 H(+)(in) = ADP + phosphate + 5 H(+)(out). In terms of biological role, produces ATP from ADP in the presence of a proton gradient across the membrane. The catalytic sites are hosted primarily by the beta subunits. The polypeptide is ATP synthase subunit beta 2 (Pelobacter propionicus (strain DSM 2379 / NBRC 103807 / OttBd1)).